The primary structure comprises 506 residues: Apolipoprotein N-acyltransferase (506 aa).

A run of 6 helical transmembrane segments spans residues Phe26–Ile46, Phe66–Ala86, Leu89–Ser109, Phe113–Ala133, Gly166–Ile186, and Met192–Val212. Positions Ile225–Pro471 constitute a CN hydrolase domain. Glu264 functions as the Proton acceptor in the catalytic mechanism. Lys330 is a catalytic residue. The Nucleophile role is filled by Cys382. The helical transmembrane segment at His479 to Trp499 threads the bilayer.

It belongs to the CN hydrolase family. Apolipoprotein N-acyltransferase subfamily.

The protein localises to the cell inner membrane. It catalyses the reaction N-terminal S-1,2-diacyl-sn-glyceryl-L-cysteinyl-[lipoprotein] + a glycerophospholipid = N-acyl-S-1,2-diacyl-sn-glyceryl-L-cysteinyl-[lipoprotein] + a 2-acyl-sn-glycero-3-phospholipid + H(+). The protein operates within protein modification; lipoprotein biosynthesis (N-acyl transfer). In terms of biological role, catalyzes the phospholipid dependent N-acylation of the N-terminal cysteine of apolipoprotein, the last step in lipoprotein maturation. The sequence is that of Apolipoprotein N-acyltransferase from Vibrio vulnificus (strain CMCP6).